Consider the following 602-residue polypeptide: Elongation factor 4 (602 aa).

The region spanning 7–190 is the tr-type G domain; sequence KHIRNFCIVA…AVVQKVPAPS (184 aa). GTP contacts are provided by residues 19–24 and 137–140; these read DHGKST and NKID.

It belongs to the TRAFAC class translation factor GTPase superfamily. Classic translation factor GTPase family. LepA subfamily.

The protein resides in the cell membrane. It carries out the reaction GTP + H2O = GDP + phosphate + H(+). Its function is as follows. Required for accurate and efficient protein synthesis under certain stress conditions. May act as a fidelity factor of the translation reaction, by catalyzing a one-codon backward translocation of tRNAs on improperly translocated ribosomes. Back-translocation proceeds from a post-translocation (POST) complex to a pre-translocation (PRE) complex, thus giving elongation factor G a second chance to translocate the tRNAs correctly. Binds to ribosomes in a GTP-dependent manner. The sequence is that of Elongation factor 4 from Clostridium acetobutylicum (strain ATCC 824 / DSM 792 / JCM 1419 / IAM 19013 / LMG 5710 / NBRC 13948 / NRRL B-527 / VKM B-1787 / 2291 / W).